The primary structure comprises 320 residues: Aspartate carbamoyltransferase catalytic subunit (320 aa).

Residues Arg-68 and Thr-69 each coordinate carbamoyl phosphate. Lys-96 contacts L-aspartate. The carbamoyl phosphate site is built by Arg-118, His-148, and Gln-151. L-aspartate contacts are provided by Arg-181 and Arg-236. The carbamoyl phosphate site is built by Gly-277 and Pro-278.

This sequence belongs to the aspartate/ornithine carbamoyltransferase superfamily. ATCase family. As to quaternary structure, heterododecamer (2C3:3R2) of six catalytic PyrB chains organized as two trimers (C3), and six regulatory PyrI chains organized as three dimers (R2).

The catalysed reaction is carbamoyl phosphate + L-aspartate = N-carbamoyl-L-aspartate + phosphate + H(+). Its pathway is pyrimidine metabolism; UMP biosynthesis via de novo pathway; (S)-dihydroorotate from bicarbonate: step 2/3. Functionally, catalyzes the condensation of carbamoyl phosphate and aspartate to form carbamoyl aspartate and inorganic phosphate, the committed step in the de novo pyrimidine nucleotide biosynthesis pathway. The protein is Aspartate carbamoyltransferase catalytic subunit of Variovorax paradoxus (strain S110).